A 318-amino-acid chain; its full sequence is NADH-ubiquinone oxidoreductase chain 1 (318 aa).

The next 8 membrane-spanning stretches (helical) occupy residues 3-23 (MVNLLTMIVPILLAVAFLTLI), 70-90 (MFIIAPILALTLALTMWIPLP), 100-120 (LAVLFMLAMSSLAVYSILWSG), 146-166 (LAIILLSVLLLSGSFSLSTLI), 171-191 (HTWLMLSSWPLAMMWFISTLA), 222-242 (LFFMAEYANIIMMNTLTAILF), 253-273 (ELYTINLIIKALLLTVFFLWI), and 294-314 (LPLTLALCMWHVAMPITMAGI).

Belongs to the complex I subunit 1 family.

The protein localises to the mitochondrion inner membrane. It carries out the reaction a ubiquinone + NADH + 5 H(+)(in) = a ubiquinol + NAD(+) + 4 H(+)(out). Core subunit of the mitochondrial membrane respiratory chain NADH dehydrogenase (Complex I) that is believed to belong to the minimal assembly required for catalysis. Complex I functions in the transfer of electrons from NADH to the respiratory chain. The immediate electron acceptor for the enzyme is believed to be ubiquinone. In Pteropus vampyrus (Large flying fox), this protein is NADH-ubiquinone oxidoreductase chain 1 (MT-ND1).